The following is a 494-amino-acid chain: Inosine-5'-monophosphate dehydrogenase (494 aa).

CBS domains follow at residues 93 to 154 (IIRN…NEKI) and 158 to 217 (MTTD…CKDM). Residues aspartate 251 and 301–303 (GIG) each bind NAD(+). Positions 303 and 305 each coordinate K(+). IMP is bound at residue serine 306. A K(+)-binding site is contributed by cysteine 308. Catalysis depends on cysteine 308, which acts as the Thioimidate intermediate. IMP contacts are provided by residues 341-343 (DGG), 364-365 (GS), and 388-392 (YRGMG). The active-site Proton acceptor is arginine 406. Residue glutamate 421 coordinates IMP. K(+) contacts are provided by glutamate 475, serine 476, and histidine 477.

Belongs to the IMPDH/GMPR family. Homotetramer. K(+) is required as a cofactor.

It carries out the reaction IMP + NAD(+) + H2O = XMP + NADH + H(+). It functions in the pathway purine metabolism; XMP biosynthesis via de novo pathway; XMP from IMP: step 1/1. Its activity is regulated as follows. Mycophenolic acid (MPA) is a non-competitive inhibitor that prevents formation of the closed enzyme conformation by binding to the same site as the amobile flap. In contrast, mizoribine monophosphate (MZP) is a competitive inhibitor that induces the closed conformation. MPA is a potent inhibitor of mammalian IMPDHs but a poor inhibitor of the bacterial enzymes. MZP is a more potent inhibitor of bacterial IMPDH. Catalyzes the conversion of inosine 5'-phosphate (IMP) to xanthosine 5'-phosphate (XMP), the first committed and rate-limiting step in the de novo synthesis of guanine nucleotides, and therefore plays an important role in the regulation of cell growth. This is Inosine-5'-monophosphate dehydrogenase from Chlorobaculum parvum (strain DSM 263 / NCIMB 8327) (Chlorobium vibrioforme subsp. thiosulfatophilum).